The sequence spans 417 residues: Brevican core protein (417 aa).

A signal peptide spans 1–22; that stretch reads MAPLFLPLLIALALAPGPTASA. The 133-residue stretch at 23–155 folds into the Ig-like V-type domain; it reads DVLEGDSSED…SSDAVEVKVK (133 aa). Cystine bridges form between Cys-57-Cys-137, Cys-179-Cys-250, and Cys-203-Cys-224. Asn-130 carries an N-linked (GlcNAc...) asparagine glycan. 2 Link domains span residues 157–252 and 257–354; these read VVFL…YCYA and GELF…YCFR. Asn-267 carries N-linked (GlcNAc...) asparagine glycosylation. 2 cysteine pairs are disulfide-bonded: Cys-277–Cys-352 and Cys-301–Cys-322. Asn-337 carries N-linked (GlcNAc...) asparagine glycosylation.

The protein belongs to the aggrecan/versican proteoglycan family. Central nervous system.

The protein resides in the secreted. It is found in the extracellular space. Its subcellular location is the extracellular matrix. In terms of biological role, may play a role in the terminally differentiating and the adult nervous system during postnatal development. Could stabilize interactions between hyaluronan (HA) and brain proteoglycans. This chain is Brevican core protein (BCAN), found in Felis catus (Cat).